Consider the following 400-residue polypeptide: Cysteine desulfurase (400 aa).

Pyridoxal 5'-phosphate is bound by residues 71-72 (GT), N150, Q178, and 198-200 (SGH). Residue K201 is modified to N6-(pyridoxal phosphate)lysine. T236 contacts pyridoxal 5'-phosphate. C324 acts as the Cysteine persulfide intermediate in catalysis. C324 is a [2Fe-2S] cluster binding site.

This sequence belongs to the class-V pyridoxal-phosphate-dependent aminotransferase family. NifS/IscS subfamily. In terms of assembly, homodimer. Pyridoxal 5'-phosphate is required as a cofactor.

It carries out the reaction (sulfur carrier)-H + L-cysteine = (sulfur carrier)-SH + L-alanine. Catalyzes the removal of elemental sulfur atoms from cysteine to produce alanine. Seems to participate in the biosynthesis of the nitrogenase metalloclusters by providing the inorganic sulfur required for the Fe-S core formation. This is Cysteine desulfurase from Nostoc sp. (strain PCC 7120 / SAG 25.82 / UTEX 2576).